An 833-amino-acid chain; its full sequence is Leucine--tRNA ligase (833 aa).

A 'HIGH' region motif is present at residues 41-52; the sequence is PYPSGAGLHVGH. Positions 610–614 match the 'KMSKS' region motif; sequence KMSKS. Residue Lys613 participates in ATP binding.

Belongs to the class-I aminoacyl-tRNA synthetase family.

It localises to the cytoplasm. It carries out the reaction tRNA(Leu) + L-leucine + ATP = L-leucyl-tRNA(Leu) + AMP + diphosphate. In Streptococcus uberis (strain ATCC BAA-854 / 0140J), this protein is Leucine--tRNA ligase.